The chain runs to 254 residues: RNA polymerase sigma-D factor (254 aa).

A Polymerase core binding motif is present at residues 54-67 (DLMSLGMLGLYDAL). The segment at residues 220–239 (LTEIGQVLNLSTSRISQIHS) is a DNA-binding region (H-T-H motif).

In terms of assembly, monomer. Interacts transiently with the RNAP core.

Functionally, sigma factors are initiation factors that promote the attachment of RNA polymerase (RNAP) to specific initiation sites and are then released. This alternative sigma factor is required for the transcription of the flagellin and motility genes as well as for wild-type chemotaxis. Associates with the RNAP core during all growth phases with a peak at the transition to stationary phase. The protein is RNA polymerase sigma-D factor (sigD) of Bacillus subtilis (strain 168).